The chain runs to 919 residues: Beta-galactosidase 15 (919 aa).

The N-terminal stretch at 1–31 (MAASRGPPLLGFRALALALLLAILLLLGCSA) is a signal peptide. Asparagine 63 carries an N-linked (GlcNAc...) asparagine glycan. Residue glutamate 220 is the Proton donor of the active site. Glutamate 289 acts as the Nucleophile in catalysis. N-linked (GlcNAc...) asparagine glycans are attached at residues asparagine 412, asparagine 530, asparagine 546, and asparagine 855. Residues 822–907 (NAATPELRLQ…KDLAVEAKCS (86 aa)) enclose the SUEL-type lectin domain.

Belongs to the glycosyl hydrolase 35 family.

The protein localises to the secreted. The protein resides in the extracellular space. It localises to the apoplast. The enzyme catalyses Hydrolysis of terminal non-reducing beta-D-galactose residues in beta-D-galactosides.. The sequence is that of Beta-galactosidase 15 from Oryza sativa subsp. japonica (Rice).